Reading from the N-terminus, the 281-residue chain is Bifunctional N-acyl-homoserine lactone acylase/prephenate dehydratase (281 aa).

Residues 6 to 181 (IIAFQGRPGA…NTTRFYIASR (176 aa)) enclose the Prephenate dehydratase domain. Residues 196–273 (TLLFRVNNQP…EQQEILGVYP (78 aa)) enclose the ACT domain. Residues alanine 207, leucine 208, asparagine 221, and methionine 222 each coordinate L-phenylalanine.

Homodimer.

The enzyme catalyses an N-acyl-L-homoserine lactone + H2O = L-homoserine lactone + a carboxylate. It carries out the reaction prephenate + H(+) = 3-phenylpyruvate + CO2 + H2O. It participates in amino-acid biosynthesis; L-phenylalanine biosynthesis; phenylpyruvate from prephenate: step 1/1. In terms of biological role, multifunctional enzyme that acts on N-acyl-homoserine lactones (AHLs), beta-lactam antibiotics and shows prephenate dehydratase activity. Acts as an acylase on AHL and hydrolyzes the amide bond of the acyl side-chain of AHL molecules, releasing homoserine lactone (HSL) and the fatty acid. Can use different 3-oxo-acyl homoserine lactones, such as 3-oxo-decanoyl homoserine lactone, which is the preferred substrate, 3-oxo-octanoyl homoserine lactone, 3-oxo-hexanoyl homoserine lactone and 3-oxo-dodecanoyl homoserine lactone. It can also degrade various beta-lactam antibiotics, including penicillin G, amoxicillin and ampicillin, but not cefotaxime. In addition, it can complement a phenylalanine auxotrophic E.coli mutant, which carries a kanamycin gene inserted into pheA, suggesting that GqqA can also function as a prephenate dehydratase. Involved in bacterial quorum quenching (QQ) and cellulose biofilm formation. The polypeptide is Bifunctional N-acyl-homoserine lactone acylase/prephenate dehydratase (Komagataeibacter europaeus (Gluconacetobacter europaeus)).